The following is an 851-amino-acid chain: Envelope glycoprotein gp160 (851 aa).

A signal peptide spans 1 to 31 (MKVMGIQRNCQQWWIWGILGFWMLMICNGMG). Residues 32 to 672 (NLWVTVYYGV…ITNWLWYIKI (641 aa)) are Extracellular-facing. An intrachain disulfide couples C53 to C73. N-linked (GlcNAc...) asparagine; by host glycans are attached at residues N87, N135, N141, N153, N157, N183, and N194. 5 disulfide bridges follow: C118–C202, C125–C193, C130–C154, C215–C244, and C225–C236. Residues 130 to 153 (CNAIKNNTKVTNNSINSANDEMKN) form a V1 region. A V2 region spans residues 154–193 (CSFNITTELRDKKRKAYALFYKLDIVPLNNGSTDYRLINC). N238, N259, N273, N286, N298, N328, N335, and N351 each carry an N-linked (GlcNAc...) asparagine; by host glycan. Residues 293–326 (CTRPSNNTRESIRIGPGQTFYATGDIIGDIRQAH) are V3. Cysteines 293 and 327 form a disulfide. Positions 359–369 (SSGGDLEITTH) are CD4-binding loop. 2 cysteine pairs are disulfide-bonded: C373–C433 and C380–C406. Residues 380–406 (CNTSNLFNSTKLELFNSSTNLNITLQC) form a V4 region. N381, N387, N395, N401, and N436 each carry an N-linked (GlcNAc...) asparagine; by host glycan. 2 V5 regions span residues 449-460 (EPHSTKEIFRPE) and 451-460 (HSTKEIFRPE). The segment at 501-520 (AALGALFLGFLGAAGSTMGA) is fusion peptide. An immunosuppression region spans residues 562–580 (KQLQTRVLAIERHLRDQQL). C586 and C592 form a disulfide bridge. Residues N599, N604, N613, N625, and N662 are each glycosylated (N-linked (GlcNAc...) asparagine; by host). Residues 621-655 (REISNYTDIIYNLLEVSQNQQDKNEKDLLALDKWE) are a coiled coil. The MPER; binding to GalCer stretch occupies residues 650 to 671 (ALDKWENLWNWFNITNWLWYIK). The chain crosses the membrane as a helical span at residues 673–693 (FIMIVGGVIGLRIIFAVLSIV). Residues 694-851 (NRVRQGYSPL…IRQGLEAALQ (158 aa)) lie on the Cytoplasmic side of the membrane. The YXXL motif; contains endocytosis signal signature appears at 700 to 703 (YSPL). A lipid anchor (S-palmitoyl cysteine; by host) is attached at C752.

Belongs to the HIV-1 env protein family. The mature envelope protein (Env) consists of a homotrimer of non-covalently associated gp120-gp41 heterodimers. The resulting complex protrudes from the virus surface as a spike. There seems to be as few as 10 spikes on the average virion. Interacts with host CD4, CCR5 and CXCR4. Gp120 also interacts with the C-type lectins CD209/DC-SIGN and CLEC4M/DC-SIGNR (collectively referred to as DC-SIGN(R)). Gp120 and gp41 interact with GalCer. Gp120 interacts with host ITGA4/ITGB7 complex; on CD4+ T-cells, this interaction results in rapid activation of integrin ITGAL/LFA-1, which facilitates efficient cell-to-cell spreading of HIV-1. Gp120 interacts with cell-associated heparan sulfate; this interaction increases virus infectivity on permissive cells and may be involved in infection of CD4- cells. As to quaternary structure, the mature envelope protein (Env) consists of a homotrimer of non-covalently associated gp120-gp41 heterodimers. The resulting complex protrudes from the virus surface as a spike. There seems to be as few as 10 spikes on the average virion. Highly glycosylated by host. The high number of glycan on the protein is reffered to as 'glycan shield' because it contributes to hide protein sequence from adaptive immune system. Post-translationally, palmitoylation of the transmembrane protein and of Env polyprotein (prior to its proteolytic cleavage) is essential for their association with host cell membrane lipid rafts. Palmitoylation is therefore required for envelope trafficking to classical lipid rafts, but not for viral replication. In terms of processing, specific enzymatic cleavages in vivo yield mature proteins. Envelope glycoproteins are synthesized as an inactive precursor that is heavily N-glycosylated and processed likely by host cell furin in the Golgi to yield the mature SU and TM proteins. The cleavage site between SU and TM requires the minimal sequence [KR]-X-[KR]-R. About 2 of the 9 disulfide bonds of gp41 are reduced by P4HB/PDI, following binding to CD4 receptor.

The protein localises to the virion membrane. It is found in the host cell membrane. The protein resides in the host endosome membrane. Functionally, oligomerizes in the host endoplasmic reticulum into predominantly trimers. In a second time, gp160 transits in the host Golgi, where glycosylation is completed. The precursor is then proteolytically cleaved in the trans-Golgi and thereby activated by cellular furin or furin-like proteases to produce gp120 and gp41. Its function is as follows. Attaches the virus to the host lymphoid cell by binding to the primary receptor CD4. This interaction induces a structural rearrangement creating a high affinity binding site for a chemokine coreceptor like CXCR4 and/or CCR5. Acts as a ligand for CD209/DC-SIGN and CLEC4M/DC-SIGNR, which are respectively found on dendritic cells (DCs), and on endothelial cells of liver sinusoids and lymph node sinuses. These interactions allow capture of viral particles at mucosal surfaces by these cells and subsequent transmission to permissive cells. HIV subverts the migration properties of dendritic cells to gain access to CD4+ T-cells in lymph nodes. Virus transmission to permissive T-cells occurs either in trans (without DCs infection, through viral capture and transmission), or in cis (following DCs productive infection, through the usual CD4-gp120 interaction), thereby inducing a robust infection. In trans infection, bound virions remain infectious over days and it is proposed that they are not degraded, but protected in non-lysosomal acidic organelles within the DCs close to the cell membrane thus contributing to the viral infectious potential during DCs' migration from the periphery to the lymphoid tissues. On arrival at lymphoid tissues, intact virions recycle back to DCs' cell surface allowing virus transmission to CD4+ T-cells. Acts as a class I viral fusion protein. Under the current model, the protein has at least 3 conformational states: pre-fusion native state, pre-hairpin intermediate state, and post-fusion hairpin state. During fusion of viral and target intracellular membranes, the coiled coil regions (heptad repeats) assume a trimer-of-hairpins structure, positioning the fusion peptide in close proximity to the C-terminal region of the ectodomain. The formation of this structure appears to drive apposition and subsequent fusion of viral and target cell membranes. Complete fusion occurs in host cell endosomes and is dynamin-dependent, however some lipid transfer might occur at the plasma membrane. The virus undergoes clathrin-dependent internalization long before endosomal fusion, thus minimizing the surface exposure of conserved viral epitopes during fusion and reducing the efficacy of inhibitors targeting these epitopes. Membranes fusion leads to delivery of the nucleocapsid into the cytoplasm. The sequence is that of Envelope glycoprotein gp160 from Homo sapiens (Human).